The primary structure comprises 212 residues: Large ribosomal subunit protein uL3 (212 aa).

Gln-153 bears the N5-methylglutamine mark.

Belongs to the universal ribosomal protein uL3 family. In terms of assembly, part of the 50S ribosomal subunit. Forms a cluster with proteins L14 and L19. In terms of processing, methylated by PrmB.

One of the primary rRNA binding proteins, it binds directly near the 3'-end of the 23S rRNA, where it nucleates assembly of the 50S subunit. The polypeptide is Large ribosomal subunit protein uL3 (Marinobacter nauticus (strain ATCC 700491 / DSM 11845 / VT8) (Marinobacter aquaeolei)).